We begin with the raw amino-acid sequence, 444 residues long: COP9 signalosome complex subunit 2 (444 aa).

A disordered region spans residues 1–31 (MSDNDDDFMCDDDEDYGLEYSEDSNSEPDVD). The 163-residue stretch at 255–417 (AHTDFFEAFK…QVLQLDKINS (163 aa)) folds into the PCI domain.

It belongs to the CSN2 family. Component of the CSN complex, probably composed of CSN1b, alien/CSN2, CSN3, CSN4, CSN5, CSN6, CSN7 and CSN8. Interacts with Rpn6. As to expression, expressed during embryonic stages 11-14 in the muscle attachment sites (apodemes); pharynx attachment to the roof of the mouth and in the epidermis of the head for the dorsal and ventral prothoracic pharyngeal muscle attachment. From stage 16 onwards expression is seen in all thoracic and abdominal apodemes.

Its subcellular location is the cytoplasm. The protein resides in the nucleus. Its function is as follows. Component of the COP9 signalosome complex (CSN), a complex involved in various cellular and developmental processes. The CSN complex is an essential regulator of the ubiquitin (Ubl) conjugation pathway by mediating the deneddylation of the cullin subunits of the SCF-type E3 ligase complexes, leading to decrease the Ubl ligase activity of SCF. The CSN complex plays an essential role in oogenesis and embryogenesis and is required for proper photoreceptor R cell differentiation and promote lamina glial cell migration or axon targeting. It also promotes Ubl-dependent degradation of cyclin E (CycE) during early oogenesis. The polypeptide is COP9 signalosome complex subunit 2 (Drosophila melanogaster (Fruit fly)).